The primary structure comprises 275 residues: Homeobox-leucine zipper protein ATHB-17 (275 aa).

A disordered region spans residues 95-143 (SSPLSDEGSGGGRDQLRLDMNRLPSSEDGDDEEFSHDDGSAPPRKKLRL). The segment at residues 136 to 195 (PPRKKLRLTREQSRLLEDSFRQNHTLNPKQKEVLAKHLMLRPRQIEVWFQNRRARSKLKQ) is a DNA-binding region (homeobox). The interval 203 to 224 (LKRWFGSLTEENHRLHREVEEL) is leucine-zipper. Residues 252-275 (AASPSRAVVPVPAKKTFPPQERDR) are disordered.

It belongs to the HD-ZIP homeobox family. Class II subfamily.

The protein localises to the nucleus. In terms of biological role, probable transcription factor. The polypeptide is Homeobox-leucine zipper protein ATHB-17 (ATHB-17) (Arabidopsis thaliana (Mouse-ear cress)).